A 245-amino-acid chain; its full sequence is Sugar fermentation stimulation protein homolog (245 aa).

The protein belongs to the SfsA family.

This is Sugar fermentation stimulation protein homolog from Yersinia pseudotuberculosis serotype I (strain IP32953).